The sequence spans 426 residues: SrfA-induced gene K protein (426 aa).

The signal sequence occupies residues 1–23 (MKKMKILSFFILSLAIIIGIVYS). 4 N-linked (GlcNAc...) asparagine glycosylation sites follow: Asn64, Asn136, Asn160, and Asn226. 2 consecutive Laminin EGF-like domains span residues 325–348 (DNQCQCSVGFSGDDCRQCDNGMVL) and 384–408 (CNGTCTCLPGFSGNDCTLCGNGGEV). Disulfide bonds link Cys330-Cys339, Cys342-Cys358, and Cys370-Cys388. The N-linked (GlcNAc...) asparagine glycan is linked to Asn385.

This Dictyostelium discoideum (Social amoeba) protein is SrfA-induced gene K protein (sigK).